The chain runs to 561 residues: Putative pectinesterase/pectinesterase inhibitor 24 (561 aa).

The chain crosses the membrane as a helical span at residues 26-46 (IAIIAVSLVILAGIVIGAVFG). Positions 64-211 (DSISVSVKAV…TELTSNALAI (148 aa)) are pectinesterase inhibitor 24. N92, N130, N148, and N200 each carry an N-linked (GlcNAc...) asparagine glycan. The tract at residues 255–548 (DIVVAKDGSG…TVKPFIDGGR (294 aa)) is pectinesterase 24. Residues T330 and Q360 each coordinate substrate. Catalysis depends on D383, which acts as the Proton donor; for pectinesterase activity. An intrachain disulfide couples C397 to C417. Catalysis depends on D404, which acts as the Nucleophile; for pectinesterase activity. Substrate-binding residues include R468 and W470. A glycan (N-linked (GlcNAc...) asparagine) is linked at N472.

This sequence in the N-terminal section; belongs to the PMEI family. It in the C-terminal section; belongs to the pectinesterase family.

The protein localises to the membrane. It carries out the reaction [(1-&gt;4)-alpha-D-galacturonosyl methyl ester](n) + n H2O = [(1-&gt;4)-alpha-D-galacturonosyl](n) + n methanol + n H(+). Its pathway is glycan metabolism; pectin degradation; 2-dehydro-3-deoxy-D-gluconate from pectin: step 1/5. In terms of biological role, acts in the modification of cell walls via demethylesterification of cell wall pectin. This is Putative pectinesterase/pectinesterase inhibitor 24 (PME24) from Arabidopsis thaliana (Mouse-ear cress).